The primary structure comprises 135 residues: ATP synthase epsilon chain (135 aa).

It belongs to the ATPase epsilon chain family. In terms of assembly, F-type ATPases have 2 components, CF(1) - the catalytic core - and CF(0) - the membrane proton channel. CF(1) has five subunits: alpha(3), beta(3), gamma(1), delta(1), epsilon(1). CF(0) has three main subunits: a, b and c.

It localises to the cell inner membrane. In terms of biological role, produces ATP from ADP in the presence of a proton gradient across the membrane. In Brucella anthropi (strain ATCC 49188 / DSM 6882 / CCUG 24695 / JCM 21032 / LMG 3331 / NBRC 15819 / NCTC 12168 / Alc 37) (Ochrobactrum anthropi), this protein is ATP synthase epsilon chain.